The chain runs to 329 residues: D-alanine--D-alanine ligase (329 aa).

The region spanning Lys-120 to Asn-326 is the ATP-grasp domain. Ala-150–Glu-205 is an ATP binding site. 3 residues coordinate Mg(2+): Asp-280, Glu-293, and Asn-295.

It belongs to the D-alanine--D-alanine ligase family. Mg(2+) is required as a cofactor. Requires Mn(2+) as cofactor.

The protein localises to the cytoplasm. The enzyme catalyses 2 D-alanine + ATP = D-alanyl-D-alanine + ADP + phosphate + H(+). It participates in cell wall biogenesis; peptidoglycan biosynthesis. In terms of biological role, cell wall formation. The sequence is that of D-alanine--D-alanine ligase from Vibrio campbellii (strain ATCC BAA-1116).